The sequence spans 466 residues: Glutamate--tRNA ligase 2 (466 aa).

A 'HIGH' region motif is present at residues 9 to 19; it reads PSPTGSLHLGG. Residues 236–240 carry the 'KMSKS' region motif; sequence KLSKR. ATP is bound at residue Lys-239.

Belongs to the class-I aminoacyl-tRNA synthetase family. Glutamate--tRNA ligase type 1 subfamily. As to quaternary structure, monomer.

The protein resides in the cytoplasm. The enzyme catalyses tRNA(Glu) + L-glutamate + ATP = L-glutamyl-tRNA(Glu) + AMP + diphosphate. In terms of biological role, catalyzes the attachment of glutamate to tRNA(Glu) in a two-step reaction: glutamate is first activated by ATP to form Glu-AMP and then transferred to the acceptor end of tRNA(Glu). This is Glutamate--tRNA ligase 2 from Anaplasma marginale (strain St. Maries).